A 270-amino-acid polypeptide reads, in one-letter code: MGFWCRMSENQEQEEVITVRVQDPRVQNEGSWNSYVDYKIFLHTNSKAFTAKTSCVRRRYREFVWLRKQLQRNAGLVPVPELPGKSTFFGTSDEFIEKRRQGLQHFLEKVLQSVVLLSDSQLHLFLQSQLSVPEIEACVQGRSTMTVSDAILRYAMSNCGWAQEERQSSSHLAKGDQPKSCCFLPRSGRRSSPSPPPSEEKDHLEVWAPVVDSEVPSLESPTLPPLSSPLCCDFGRPKEGTSTLQSVRRAVGGDHAVPLDPGQLETVLEK.

Residues 16–132 (VITVRVQDPR…HLFLQSQLSV (117 aa)) enclose the PX domain. Residues arginine 59, lysine 85, and arginine 99 each contribute to the a 1,2-diacyl-sn-glycero-3-phospho-(1D-myo-inositol-3-phosphate) site. The important for membrane trafficking stretch occupies residues 135–139 (IEACV). The segment covering 168–177 (SSSHLAKGDQ) has biased composition (basic and acidic residues). A disordered region spans residues 168 to 203 (SSSHLAKGDQPKSCCFLPRSGRRSSPSPPPSEEKDH).

Belongs to the sorting nexin family. As to quaternary structure, monomer. Interacts with TRPV3; this interaction promotes TRPV3 trafficking from the cell membrane to lysosome for degradation.

The protein localises to the cell membrane. Its subcellular location is the endosome. The protein resides in the cytoplasm. Its function is as follows. Phosphoinositide-binding protein involved in protein sorting and membrane trafficking in endosomes. Regulates the levels of TRPV3 by promoting its trafficking from the cell membrane to lysosome for degradation. This is Sorting nexin-11 (SNX11) from Homo sapiens (Human).